A 1370-amino-acid polypeptide reads, in one-letter code: Histidine kinase P4 (1370 aa).

An N-terminal signal peptide occupies residues 1–20 (MRNIGVFSVILFSFLAISLK). A helical membrane pass occupies residues 799 to 819 (WAFCLYALCIGTALIALISFL). Positions 852–1072 (NISHEFRTPL…IFRVSLPLGR (221 aa)) constitute a Histidine kinase domain. Phosphohistidine; by autocatalysis is present on His-855. Residues 1119-1234 (TILIVEDHKP…EFRLRIKNIL (116 aa)) enclose the Response regulatory domain. Asp-1167 is subject to 4-aspartylphosphate. One can recognise an HTH araC/xylS-type domain in the interval 1266–1365 (KKAFKIVEDN…NETPSQYQNR (100 aa)). 2 DNA-binding regions (H-T-H motif) span residues 1284 to 1305 (LAFSQELGVSRTTLFNKIKAWT) and 1332 to 1355 (ISQISYQVGFKSPKYFSKCFQKKF).

Post-translationally, autophosphorylated. Activation requires a sequential transfer of a phosphate group from a His in the primary transmitter domain, to an Asp in the receiver domain and to a His in the secondary transmitter domain.

The protein resides in the membrane. It is found in the cell surface. The catalysed reaction is ATP + protein L-histidine = ADP + protein N-phospho-L-histidine.. In terms of biological role, histidine kinase probably involved in ulvan degradation. Ulvan is the main polysaccharide component of the Ulvales (green seaweed) cell wall. It is composed of disaccharide building blocks comprising 3-sulfated rhamnose (Rha3S) linked to D-glucuronic acid (GlcA), L-iduronic acid (IduA), or D-xylose (Xyl). This chain is Histidine kinase P4, found in Formosa agariphila (strain DSM 15362 / KCTC 12365 / LMG 23005 / KMM 3901 / M-2Alg 35-1).